A 718-amino-acid chain; its full sequence is Cyclomaltodextrin glucanotransferase (718 aa).

An N-terminal signal peptide occupies residues 1 to 34 (MFQMAKRAFLSTTLTLGLLAGSALPFLPASAVYA). The tract at residues 35 to 172 (DPDTAVTNKQ…GIKIVIDFAP (138 aa)) is A1. The Ca(2+) site is built by Asp61, Asn63, Asn66, and Asn67. Residues Cys77 and Cys84 are joined by a disulfide bond. Residues Gly85 and Asp87 each coordinate Ca(2+). A substrate-binding site is contributed by 134–135 (YW). Asn173 provides a ligand contact to Ca(2+). Residues 173 to 236 (NHTSPAMETD…NLYDLADFNH (64 aa)) form a b region. His174 contacts substrate. Residue Ile224 participates in Ca(2+) binding. Residues 227–230 (NLYD) and Asp230 contribute to the substrate site. Asp233 serves as a coordination point for Ca(2+). The A2 stretch occupies residues 237 to 440 (NNATIDKYFK…LRKSNPAIAY (204 aa)). Arg261 is a binding site for substrate. Asp263 functions as the Nucleophile in the catalytic mechanism. Substrate contacts are provided by residues 266-267 (KH) and His267. His267 provides a ligand contact to Ca(2+). Glu291 (proton donor) is an active-site residue. Residues His361, Asp405, and Arg409 each coordinate substrate. The interval 441 to 528 (GSTQQRWINN…ATAVWQYTTA (88 aa)) is c. The d stretch occupies residues 529–614 (ETTPTIGHVG…SNAYNNFTIL (86 aa)). The IPT/TIG domain occupies 532 to 612 (PTIGHVGPVM…VNSNAYNNFT (81 aa)). Positions 613 to 718 (ILTGDQVTVR…GTATVTVNWQ (106 aa)) constitute a CBM20 domain. The segment at 615–718 (TGDQVTVRFV…GTATVTVNWQ (104 aa)) is e.

It belongs to the glycosyl hydrolase 13 family. In terms of assembly, monomer. Ca(2+) is required as a cofactor.

It is found in the secreted. It carries out the reaction Cyclizes part of a (1-&gt;4)-alpha-D-glucan chain by formation of a (1-&gt;4)-alpha-D-glucosidic bond.. The protein is Cyclomaltodextrin glucanotransferase of Niallia circulans (Bacillus circulans).